The chain runs to 434 residues: Enolase (434 aa).

Gln163 contributes to the (2R)-2-phosphoglycerate binding site. Glu205 functions as the Proton donor in the catalytic mechanism. Residues Asp242, Glu289, and Asp316 each coordinate Mg(2+). The (2R)-2-phosphoglycerate site is built by Lys341, Arg370, Ser371, and Lys392. Catalysis depends on Lys341, which acts as the Proton acceptor.

This sequence belongs to the enolase family. It depends on Mg(2+) as a cofactor.

It localises to the cytoplasm. Its subcellular location is the secreted. The protein resides in the cell surface. The enzyme catalyses (2R)-2-phosphoglycerate = phosphoenolpyruvate + H2O. Its pathway is carbohydrate degradation; glycolysis; pyruvate from D-glyceraldehyde 3-phosphate: step 4/5. Functionally, catalyzes the reversible conversion of 2-phosphoglycerate (2-PG) into phosphoenolpyruvate (PEP). It is essential for the degradation of carbohydrates via glycolysis. In Lacticaseibacillus paracasei (strain ATCC 334 / BCRC 17002 / CCUG 31169 / CIP 107868 / KCTC 3260 / NRRL B-441) (Lactobacillus paracasei), this protein is Enolase.